The chain runs to 458 residues: Purple acid phosphatase 23 (458 aa).

A signal peptide spans 1 to 19 (MTLLIMITLTSISLLLAAA). 3 N-linked (GlcNAc...) asparagine glycosylation sites follow: N59, N121, and N136. D194 contacts Fe cation. Residue N200 is glycosylated (N-linked (GlcNAc...) asparagine). Fe cation contacts are provided by D221 and Y224. Residue D221 coordinates Mn(2+). Mn(2+) is bound at residue N278. Residue N278 coordinates substrate. An N-linked (GlcNAc...) asparagine glycan is attached at N331. Position 360 (H360) interacts with Mn(2+). Residue H370 is the Proton donor of the active site. H397 is a Mn(2+) binding site. 397–399 (HVH) is a binding site for substrate. Residue H399 coordinates Fe cation. N-linked (GlcNAc...) asparagine glycosylation is found at N409 and N455.

The protein belongs to the metallophosphoesterase superfamily. Purple acid phosphatase family. In terms of assembly, homodimer. Requires Fe cation as cofactor. Mn(2+) serves as cofactor. Specifically expressed in flowers.

The protein resides in the secreted. It carries out the reaction a phosphate monoester + H2O = an alcohol + phosphate. Its function is as follows. Acid phosphatase activity with ATP, ADP, dATP, pyrophosphate, polyphosphate, phosphoserine and phosphothreonine. Low or no activity with phosphotyrosine, AMP and phytate. This Arabidopsis thaliana (Mouse-ear cress) protein is Purple acid phosphatase 23 (PAP23).